The following is a 170-amino-acid chain: Histone H1.9 (170 aa).

The region spanning Arg-34–Lys-108 is the H15 domain. Ser-56 bears the Phosphoserine mark. The tract at residues Ala-118 to Pro-140 is disordered.

The protein belongs to the histone H1/H5 family. In terms of tissue distribution, expressed exclusively in the testis by haploid germ cells (at protein level).

The protein resides in the nucleus. The protein localises to the chromosome. DNA-binding protein that may be implicated in chromatin remodeling and/or transcriptional regulation during spermiogenesis, the process of spermatid maturation into spermatozoa. The sequence is that of Histone H1.9 from Mus musculus (Mouse).